Consider the following 120-residue polypeptide: C-C motif chemokine 16 (120 aa).

The N-terminal stretch at 1–23 is a signal peptide; the sequence is MKVSEAALSLLVLILIITSASRS. 2 disulfide bridges follow: cysteine 37–cysteine 60 and cysteine 38–cysteine 76.

Belongs to the intercrine beta (chemokine CC) family. As to expression, mainly expressed in liver, also found in spleen and thymus. Highly expressed in LPS- and IFN-gamma-activated monocytes, weakly in some lymphocytes, including natural killer cells, gamma-delta T-cells, and some T-cell clones.

The protein resides in the secreted. Shows chemotactic activity for lymphocytes and monocytes but not neutrophils. Also shows potent myelosuppressive activity, suppresses proliferation of myeloid progenitor cells. Recombinant SCYA16 shows chemotactic activity for monocytes and THP-1 monocytes, but not for resting lymphocytes and neutrophils. Induces a calcium flux in THP-1 cells that were desensitized by prior expression to RANTES. The sequence is that of C-C motif chemokine 16 (CCL16) from Homo sapiens (Human).